The chain runs to 211 residues: Thymidylate kinase (211 aa).

An ATP-binding site is contributed by 10–17 (GLDGSGKT).

This sequence belongs to the thymidylate kinase family.

It carries out the reaction dTMP + ATP = dTDP + ADP. Phosphorylation of dTMP to form dTDP in both de novo and salvage pathways of dTTP synthesis. The chain is Thymidylate kinase from Blochmanniella floridana.